Reading from the N-terminus, the 220-residue chain is ATP synthase subunit beta, chloroplastic (220 aa).

Belongs to the ATPase alpha/beta chains family. F-type ATPases have 2 components, CF(1) - the catalytic core - and CF(0) - the membrane proton channel. CF(1) has five subunits: alpha(3), beta(3), gamma(1), delta(1), epsilon(1). CF(0) has four main subunits: a(1), b(1), b'(1) and c(9-12).

The protein localises to the plastid. The protein resides in the chloroplast thylakoid membrane. The catalysed reaction is ATP + H2O + 4 H(+)(in) = ADP + phosphate + 5 H(+)(out). Its function is as follows. Produces ATP from ADP in the presence of a proton gradient across the membrane. The catalytic sites are hosted primarily by the beta subunits. This is ATP synthase subunit beta, chloroplastic (atpB) from Osmundastrum cinnamomeum (Cinnamon fern).